The sequence spans 108 residues: Large ribosomal subunit protein P1B (108 aa).

Low complexity predominate over residues Ala72–Ala84. Residues Ala72–Asp108 are disordered. Residues Ala85 to Met102 show a composition bias toward acidic residues.

Belongs to the eukaryotic ribosomal protein P1/P2 family. In terms of assembly, P1 and P2 exist as dimers at the large ribosomal subunit. In terms of processing, phosphorylated.

Functionally, plays an important role in the elongation step of protein synthesis. In Candida albicans (Yeast), this protein is Large ribosomal subunit protein P1B (RPP1B).